The chain runs to 227 residues: Ribonuclease HII (227 aa).

The RNase H type-2 domain occupies 1–210 (MKLAGIDEAG…LKKIEEKLAK (210 aa)). A divalent metal cation contacts are provided by Asp-7, Glu-8, and Asp-105.

This sequence belongs to the RNase HII family. It depends on Mn(2+) as a cofactor. Requires Mg(2+) as cofactor.

Its subcellular location is the cytoplasm. It catalyses the reaction Endonucleolytic cleavage to 5'-phosphomonoester.. Endonuclease that specifically degrades the RNA of RNA-DNA hybrids. This is Ribonuclease HII from Thermococcus onnurineus (strain NA1).